The chain runs to 210 residues: Chaperone protein TorD (210 aa).

The protein belongs to the TorD/DmsD family. TorD subfamily.

The protein resides in the cytoplasm. In terms of biological role, involved in the biogenesis of TorA. Acts on TorA before the insertion of the molybdenum cofactor and, as a result, probably favors a conformation of the apoenzyme that is competent for acquiring the cofactor. The protein is Chaperone protein TorD of Salmonella paratyphi B (strain ATCC BAA-1250 / SPB7).